Consider the following 255-residue polypeptide: MTLTIKEVTQLINAVNTIEELENHECFLDERKGVQNAIARRRKALEKEQALKEKYVEMTYFENEILKENPNAIICGIDEVGRGPLAGPVVACAPILNSNHNYLGLDDSKKVPVTKRLELNEALKNEVTAFAFGIATAEEIDEFNIYKATQIAMQRAIDGLSVQPTHLLIDAMTLDNALPQVSLIKGDARSVSIAAASIMAKVFRDDYMTQLSKDYPEYGFEKNAGYGTKQHLLAIDDIGIMKEHRKSFEPIKSLL.

In terms of domain architecture, RNase H type-2 spans 72–255 (AIICGIDEVG…KSFEPIKSLL (184 aa)). The a divalent metal cation site is built by D78, E79, and D170.

It belongs to the RNase HII family. Requires Mn(2+) as cofactor. Mg(2+) serves as cofactor.

Its subcellular location is the cytoplasm. The enzyme catalyses Endonucleolytic cleavage to 5'-phosphomonoester.. In terms of biological role, endonuclease that specifically degrades the RNA of RNA-DNA hybrids. The chain is Ribonuclease HII from Staphylococcus aureus (strain bovine RF122 / ET3-1).